The following is a 391-amino-acid chain: Succinate--CoA ligase [ADP-forming] subunit beta (391 aa).

The ATP-grasp domain occupies 9-248; that stretch reads KDILRKFGVA…ISEEDPFEVE (240 aa). ATP-binding positions include lysine 50, 57 to 59, glutamate 103, methionine 106, and glutamate 111; that span reads GRG. The Mg(2+) site is built by asparagine 203 and aspartate 217. Substrate contacts are provided by residues asparagine 268 and 325–327; that span reads GIV.

The protein belongs to the succinate/malate CoA ligase beta subunit family. Heterotetramer of two alpha and two beta subunits. It depends on Mg(2+) as a cofactor.

It catalyses the reaction succinate + ATP + CoA = succinyl-CoA + ADP + phosphate. It carries out the reaction GTP + succinate + CoA = succinyl-CoA + GDP + phosphate. It participates in carbohydrate metabolism; tricarboxylic acid cycle; succinate from succinyl-CoA (ligase route): step 1/1. In terms of biological role, succinyl-CoA synthetase functions in the citric acid cycle (TCA), coupling the hydrolysis of succinyl-CoA to the synthesis of either ATP or GTP and thus represents the only step of substrate-level phosphorylation in the TCA. The beta subunit provides nucleotide specificity of the enzyme and binds the substrate succinate, while the binding sites for coenzyme A and phosphate are found in the alpha subunit. This chain is Succinate--CoA ligase [ADP-forming] subunit beta, found in Chlorobium luteolum (strain DSM 273 / BCRC 81028 / 2530) (Pelodictyon luteolum).